Reading from the N-terminus, the 251-residue chain is Octanoyltransferase (251 aa).

The BPL/LPL catalytic domain occupies 56-241 (AETPDEIWIV…NLDGASAAAD (186 aa)). Residues 96 to 103 (RGGQITYH), 168 to 170 (ALG), and 181 to 183 (GLS) contribute to the substrate site. The Acyl-thioester intermediate role is filled by cysteine 199.

This sequence belongs to the LipB family.

It localises to the cytoplasm. It catalyses the reaction octanoyl-[ACP] + L-lysyl-[protein] = N(6)-octanoyl-L-lysyl-[protein] + holo-[ACP] + H(+). It participates in protein modification; protein lipoylation via endogenous pathway; protein N(6)-(lipoyl)lysine from octanoyl-[acyl-carrier-protein]: step 1/2. Functionally, catalyzes the transfer of endogenously produced octanoic acid from octanoyl-acyl-carrier-protein onto the lipoyl domains of lipoate-dependent enzymes. Lipoyl-ACP can also act as a substrate although octanoyl-ACP is likely to be the physiological substrate. This is Octanoyltransferase from Burkholderia vietnamiensis (strain G4 / LMG 22486) (Burkholderia cepacia (strain R1808)).